Consider the following 453-residue polypeptide: GTPase Der (453 aa).

EngA-type G domains are found at residues 4 to 169 (PIVA…SETP) and 177 to 352 (IKVA…RQFE). GTP-binding positions include 10 to 17 (GRPNVGKS), 57 to 61 (DTGGL), 120 to 123 (NKCE), 183 to 190 (GRPNVGKS), 230 to 234 (DTAGI), and 295 to 298 (NKWD). The KH-like domain maps to 353 to 438 (QRVTTSVINE…PIRLLWRGKK (86 aa)).

The protein belongs to the TRAFAC class TrmE-Era-EngA-EngB-Septin-like GTPase superfamily. EngA (Der) GTPase family. Associates with the 50S ribosomal subunit.

GTPase that plays an essential role in the late steps of ribosome biogenesis. This is GTPase Der from Acaryochloris marina (strain MBIC 11017).